We begin with the raw amino-acid sequence, 190 residues long: MLIKKVELVKTAFKPGDYPEPVKREVAFAGRSNVGKSTLLNTLFQRKLAHTSSKPGKTRSINFYLVNSKYYFVDLPGYGFASASKQELARWKELIEDYFSTRDNLNLVTILMDSRHPMQKNDYKMLEWIKDYSIPFIVVLTKTDKLSGNELKKMIQIYEKELKLWGSPPIIPFSAKTRRGLNELLKILIP.

The EngB-type G domain maps to 22-190 (VKREVAFAGR…LNELLKILIP (169 aa)). GTP is bound by residues 30 to 37 (GRSNVGKS), 56 to 60 (GKTRS), 74 to 77 (DLPG), 141 to 144 (TKTD), and 173 to 175 (FSA). Mg(2+)-binding residues include Ser37 and Thr58.

The protein belongs to the TRAFAC class TrmE-Era-EngA-EngB-Septin-like GTPase superfamily. EngB GTPase family. Mg(2+) is required as a cofactor.

Necessary for normal cell division and for the maintenance of normal septation. This is Probable GTP-binding protein EngB from Kosmotoga olearia (strain ATCC BAA-1733 / DSM 21960 / TBF 19.5.1).